The chain runs to 500 residues: Probable malate:quinone oxidoreductase (500 aa).

The protein belongs to the MQO family. The cofactor is FAD.

It catalyses the reaction (S)-malate + a quinone = a quinol + oxaloacetate. Its pathway is carbohydrate metabolism; tricarboxylic acid cycle; oxaloacetate from (S)-malate (quinone route): step 1/1. In Bacillus cereus (strain AH187), this protein is Probable malate:quinone oxidoreductase.